The chain runs to 132 residues: Guanyl-specific ribonuclease C2 (132 aa).

The N-terminal stretch at 1–26 is a signal peptide; the sequence is MLYNKLITIAALLVPALAAPQGLDVR. Intrachain disulfides connect Cys-28-Cys-36 and Cys-32-Cys-129. The active site involves His-66. The active-site Proton acceptor is Glu-84. The active-site Proton donor is the His-118.

This sequence belongs to the ribonuclease N1/T1 family.

The protein localises to the secreted. It catalyses the reaction [RNA] containing guanosine + H2O = an [RNA fragment]-3'-guanosine-3'-phosphate + a 5'-hydroxy-ribonucleotide-3'-[RNA fragment].. The chain is Guanyl-specific ribonuclease C2 from Aspergillus clavatus (strain ATCC 1007 / CBS 513.65 / DSM 816 / NCTC 3887 / NRRL 1 / QM 1276 / 107).